The chain runs to 52 residues: MSGRGKTGGKARAKAKTRSSRAGLQFPVGRVHRLLRKGNYAHRVGAGAPVYL.

Residues 1–25 (MSGRGKTGGKARAKAKTRSSRAGLQ) form a disordered region. Ser2 bears the N-acetylserine mark. Ser2 is modified (phosphoserine). Lys6 carries the post-translational modification N6-(2-hydroxyisobutyryl)lysine. At Lys6 the chain carries N6-acetyllysine. Basic residues predominate over residues 7 to 19 (TGGKARAKAKTRS). Lys10 is subject to N6-(2-hydroxyisobutyryl)lysine; alternate. Lys10 carries the N6-lactoyllysine; alternate modification. Residue Lys10 is modified to N6-succinyllysine. Residues Lys14 and Lys16 each participate in a glycyl lysine isopeptide (Lys-Gly) (interchain with G-Cter in ubiquitin) cross-link. Lys37 bears the N6-(2-hydroxyisobutyryl)lysine; alternate mark.

The nucleosome is a histone octamer containing two molecules each of H2A, H2B, H3 and H4 assembled in one H3-H4 heterotetramer and two H2A-H2B heterodimers. The octamer wraps approximately 147 bp of DNA. Acetylation is not necessary for the antibacterial activity. In terms of processing, monoubiquitination in C-terminus gives a specific tag for epigenetic transcriptional repression. Following DNA double-strand breaks (DSBs), it is ubiquitinated through 'Lys-63' linkage of ubiquitin moieties, leading to the recruitment of repair proteins to sites of DNA damage. H2AK119Ub and ionizing radiation-induced 'Lys-63'-linked ubiquitination are distinct events. Post-translationally, phosphorylation on Ser-2 is enhanced during mitosis. Phosphorylation on Ser-2 directly represses transcription.

It is found in the nucleus. The protein resides in the chromosome. Its subcellular location is the secreted. Core component of nucleosome. Nucleosomes wrap and compact DNA into chromatin, limiting DNA accessibility to the cellular machineries which require DNA as a template. Histones thereby play a central role in transcription regulation, DNA repair, DNA replication and chromosomal stability. DNA accessibility is regulated via a complex set of post-translational modifications of histones, also called histone code, and nucleosome remodeling. Functionally, hipposin shows strong antimicrobial activity against several Gram-positive and Gram-negative bacteria. The sequence is that of Histone H2A from Hippoglossus hippoglossus (Atlantic halibut).